A 995-amino-acid chain; its full sequence is DExH-box ATP-dependent RNA helicase DExH1 (995 aa).

2 disordered regions span residues 1–42 (MPPH…EQRW) and 156–192 (KTTQ…ASKL). Over residues 25–37 (RGGGGRGGGGGGR) the composition is skewed to gly residues. Positions 161–170 (SGSSGASASA) are enriched in low complexity. A compositionally biased stretch (polar residues) spans 171–181 (FNDQQDRTSTL). Positions 238-405 (LNSVSQNQVL…FGNSPTMHIP (168 aa)) constitute a Helicase ATP-binding domain. Position 251-258 (251-258 (GETGCGKT)) interacts with ATP. The short motif at 352-355 (DEIH) is the DEIH box element. The tract at residues 429–450 (SSDSGNYQGSSRGRRRESESKK) is disordered. Residues 484 to 663 (QIDVDLVEAT…ELCLHIKSLQ (180 aa)) enclose the Helicase C-terminal domain.

This sequence belongs to the DExH box helicase family.

It carries out the reaction ATP + H2O = ADP + phosphate + H(+). The chain is DExH-box ATP-dependent RNA helicase DExH1 from Arabidopsis thaliana (Mouse-ear cress).